Consider the following 1980-residue polypeptide: Unconventional myosin-IXb (1980 aa).

Serine 2 bears the N-acetylserine mark. Residues 15–114 (ATFHLHIYPQ…YYFLLQERNA (100 aa)) enclose the Ras-associating domain. Residues 146–954 (ADFDDLCNLP…ERQALQERLH (809 aa)) form the Myosin motor domain. 239 to 246 (GESGSGKT) serves as a coordination point for ATP. The tract at residues 715 to 736 (GVSSPVTRSHVEELPRGANTPS) is disordered. A phosphoserine mark is found at serine 717 and serine 718. The interval 845-856 (KAEPFFIRCIRS) is actin-binding. The interval 941 to 1045 (LKETERQALQ…CRGHLQRRSF (105 aa)) is neck or regulatory domain. 4 IQ domains span residues 958 to 978 (LRRI…RHFV), 981 to 1001 (KHAA…RTLE), 1002 to 1024 (RTRA…AYHH), and 1025 to 1054 (QRHS…EKQK). Residue serine 1046 is modified to Phosphoserine. Positions 1046–1980 (SQMMLEKQKA…ERAVRGAAEE (935 aa)) are tail. 3 disordered regions span residues 1049 to 1281 (MLEK…HPDT), 1302 to 1380 (SQSL…QGDS), and 1394 to 1449 (DKKP…NRKV). The segment covering 1097–1106 (TWMNSKSPNG) has biased composition (polar residues). Phosphoserine occurs at positions 1108, 1115, and 1177. 2 stretches are compositionally biased toward basic and acidic residues: residues 1129-1177 (ESHE…RKAS) and 1186-1195 (EDTKEPREDG). Phosphoserine occurs at positions 1220, 1222, 1229, 1237, 1243, and 1247. The segment covering 1235–1247 (RVSPVLPSSSLES) has biased composition (low complexity). Over residues 1250 to 1265 (DEDKGENSTKVQDKPE) the composition is skewed to basic and acidic residues. A phosphoserine mark is found at serine 1266, serine 1268, and serine 1304. Threonine 1319 is modified (phosphothreonine). Phosphoserine occurs at positions 1327, 1329, and 1337. Over residues 1327–1344 (SFSTSDVSKLSPVKTSTE) the composition is skewed to polar residues. Residues 1592–1641 (GHVFASYQVNIPQSCEQCLSYIWLMDKALLCSVCKMTCHKKCVHKIQSYC) form a Phorbol-ester/DAG-type zinc finger. The residue at position 1649 (serine 1649) is a Phosphoserine. Positions 1663–1848 (DSLTSDKASV…MLIKEQMRKY (186 aa)) constitute a Rho-GAP domain. Residues 1699–1704 (AANRTR) are interaction with RHOA. Residues 1841 to 1861 (IKEQMRKYKVKMEEINHLEAA) adopt a coiled-coil conformation. Serine 1886 is subject to Phosphoserine. The tract at residues 1891 to 1923 (VRTKSPRTPVVQDLEELGALPEEAAGGDEDREK) is disordered. The stretch at 1918–1948 (DEDREKEILMERIQSIKEEKEDITYRLPELD) forms a coiled coil. Phosphoserine occurs at positions 1932, 1952, and 1959. The span at 1937 to 1953 (KEDITYRLPELDPRGSD) shows a compositional bias: basic and acidic residues. Residues 1937 to 1980 (KEDITYRLPELDPRGSDEENLDSETSASTESLLEERAVRGAAEE) are disordered. Threonine 1965 bears the Phosphothreonine mark. Residues 1969 to 1980 (LEERAVRGAAEE) show a composition bias toward basic and acidic residues.

It belongs to the TRAFAC class myosin-kinesin ATPase superfamily. Myosin family. Interacts (via IQ domains) with CALM. Interacts with RHOA. Interacts (via Rho-GAP domain) with ROBO1; this inhibits the interaction with RHOA and the stimulation of RHOA GTPase activity, and thereby increases the levels of active RHOA. As to expression, expressed in testis, lung, thymus, brain, liver, spleen and heart muscle. Detected in lung, testis, spleen and liver, and at reduced level in different brain regions (at protein level).

The protein localises to the cytoplasm. It is found in the cell cortex. The protein resides in the perinuclear region. It localises to the cytoskeleton. Functionally, myosins are actin-based motor molecules with ATPase activity. Unconventional myosins serve in intracellular movements. Binds actin with high affinity both in the absence and presence of ATP and its mechanochemical activity is inhibited by calcium ions. Also acts as a GTPase activator for RHOA. Plays a role in the regulation of cell migration via its role as RHOA GTPase activator. This is regulated by its interaction with the SLIT2 receptor ROBO1; interaction with ROBO1 impairs interaction with RHOA and subsequent activation of RHOA GTPase activity, and thereby leads to increased levels of active, GTP-bound RHOA. The chain is Unconventional myosin-IXb (Myo9b) from Rattus norvegicus (Rat).